Here is a 239-residue protein sequence, read N- to C-terminus: Ribonuclease PH (239 aa).

Residues arginine 87 and 125-127 each bind phosphate; that span reads GTR.

The protein belongs to the RNase PH family. Homohexameric ring arranged as a trimer of dimers.

The catalysed reaction is tRNA(n+1) + phosphate = tRNA(n) + a ribonucleoside 5'-diphosphate. Phosphorolytic 3'-5' exoribonuclease that plays an important role in tRNA 3'-end maturation. Removes nucleotide residues following the 3'-CCA terminus of tRNAs; can also add nucleotides to the ends of RNA molecules by using nucleoside diphosphates as substrates, but this may not be physiologically important. Probably plays a role in initiation of 16S rRNA degradation (leading to ribosome degradation) during starvation. The polypeptide is Ribonuclease PH (Pseudomonas aeruginosa (strain LESB58)).